The chain runs to 3414 residues: Genome polyprotein (3414 aa).

The disordered stretch occupies residues Met1 to Arg30. The Cytoplasmic segment spans residues Met1–Ala98. The propeptide at Ser97–Ala117 is ER anchor for the capsid protein C, removed in mature form by serine protease NS3. Residues Thr99–Val119 traverse the membrane as a helical segment. The Extracellular segment spans residues Arg120–Trp242. Asn144 carries N-linked (GlcNAc...) asparagine; by host glycosylation. The chain crosses the membrane as a helical span at residues Lys243 to Glu260. Residue Ser261 is a topological domain, cytoplasmic. Residues Val262–Ala280 form a helical membrane-spanning segment. Topologically, residues Ser281 to Ser727 are extracellular. 6 disulfide bridges follow: Cys283/Cys310, Cys340/Cys396, Cys340/Cys401, Cys354/Cys385, Cys372/Cys396, and Cys372/Cys401. The tract at residues Asp378–Gly391 is fusion peptide. N-linked (GlcNAc...) asparagine; by host glycosylation occurs at Asn434. Cystine bridges form between Cys466-Cys570 and Cys587-Cys618. The helical transmembrane segment at Ile728–Gly748 threads the bilayer. Residues Leu749–Thr755 lie on the Extracellular side of the membrane. A helical transmembrane segment spans residues Met756–Ala776. Topologically, residues Asp777 to Glu1132 are extracellular. 6 cysteine pairs are disulfide-bonded: Cys780–Cys791, Cys831–Cys920, Cys955–Cys1000, Cys1057–Cys1106, Cys1068–Cys1090, and Cys1089–Cys1093. N-linked (GlcNAc...) asparagine; by host glycosylation is found at Asn861, Asn983, and Asn999. The helical transmembrane segment at Leu1133 to Ile1153 threads the bilayer. The Cytoplasmic segment spans residues Arg1154–Ser1158. The helical transmembrane segment at Thr1159–Val1179 threads the bilayer. Residues Arg1180–Tyr1187 lie on the Lumenal side of the membrane. A helical membrane pass occupies residues Val1188 to Leu1208. Over Leu1209–Asp1293 the chain is Cytoplasmic. The chain crosses the membrane as a helical span at residues Val1294–Trp1314. The Lumenal segment spans residues Arg1315–Thr1327. A helical membrane pass occupies residues Trp1328–Phe1348. Topologically, residues Trp1349–Ser1359 are cytoplasmic. Residues Phe1360–Met1377 form a helical membrane-spanning segment. Topologically, residues Met1378–Ser1382 are lumenal. Residues Gln1383–Thr1403 traverse the membrane as a helical segment. The Cytoplasmic portion of the chain corresponds to Arg1404–Ala1454. Residues Ala1410 to Glu1449 form an interacts with and activates NS3 protease region. The segment at residues Phe1455–Met1475 is an intramembrane region (helical). The Cytoplasmic portion of the chain corresponds to Gly1476 to Ala2160. The 180-residue stretch at Ser1490–Pro1669 folds into the Peptidase S7 domain. Residues His1543, Asp1567, and Ser1627 each act as charge relay system; for serine protease NS3 activity in the active site. Positions Thr1675–Glu1831 constitute a Helicase ATP-binding domain. Met1688–Thr1695 serves as a coordination point for ATP. A DEAH box motif is present at residues Asp1779–His1782. Residues Asp1841–Tyr2000 enclose the Helicase C-terminal domain. An N6-acetyllysine; by host modification is found at Lys1883. Residues Phe2161 to Phe2181 traverse the membrane as a helical segment. Topologically, residues Val2182–Arg2189 are lumenal. Residues Met2190–Gly2210 constitute an intramembrane region (helical). Tyr2211 is a topological domain (lumenal). Residues Gly2212–Ala2232 form a helical membrane-spanning segment. Topologically, residues Gly2233–Ala2244 are cytoplasmic. The chain crosses the membrane as a helical span at residues Tyr2245–Leu2265. The Lumenal segment spans residues Glu2266–Ser2299. The helical intramembrane region spans Trp2300–Thr2320. The Lumenal segment spans residues Lys2321 to Gly2343. Residues Ala2344 to Ala2364 constitute an intramembrane region (helical). At Thr2365 to Ser2368 the chain is on the lumenal side. Residues Leu2369–Ala2389 traverse the membrane as a helical segment. Topologically, residues Glu2390–Ser2432 are cytoplasmic. A helical membrane pass occupies residues Leu2433–Ile2453. Residues Thr2454 to Thr2477 lie on the Lumenal side of the membrane. Residues Met2478 to Leu2498 form a helical membrane-spanning segment. The Cytoplasmic portion of the chain corresponds to Gly2499 to Ile3414. The 265-residue stretch at Gly2512–Cys2776 folds into the mRNA cap 0-1 NS5-type MT domain. Ser2567 is a binding site for S-adenosyl-L-methionine. Ser2567 is modified (phosphoserine). The active-site For 2'-O-MTase activity is Lys2572. 6 residues coordinate S-adenosyl-L-methionine: Gly2597, Trp2598, Thr2615, Ile2616, Asp2642, and Val2643. Asp2657 acts as the For 2'-O-MTase activity in catalysis. Residue Ile2658 participates in S-adenosyl-L-methionine binding. Residues Lys2694 and Glu2730 each act as for 2'-O-MTase activity in the active site. Residues Glu2730 to Ser2734 form an interaction with host SCRIB region. Residue Tyr2732 coordinates S-adenosyl-L-methionine. Zn(2+) is bound by residues Glu2950, His2954, Cys2959, and Cys2962. The region spanning Gly3040–Ala3189 is the RdRp catalytic domain. Zn(2+) contacts are provided by His3224, Cys3240, and Cys3359.

This sequence in the N-terminal section; belongs to the class I-like SAM-binding methyltransferase superfamily. mRNA cap 0-1 NS5-type methyltransferase family. In terms of assembly, homodimer. Interacts (via N-terminus) with host EXOC1 (via C-terminus); this interaction results in EXOC1 degradation through the proteasome degradation pathway. As to quaternary structure, forms heterodimers with envelope protein E in the endoplasmic reticulum and Golgi. Homodimer; in the endoplasmic reticulum and Golgi. Interacts with protein prM. Interacts with non-structural protein 1. In terms of assembly, homodimer; Homohexamer when secreted. Interacts with envelope protein E. As to quaternary structure, interacts (via N-terminus) with serine protease NS3. Forms a heterodimer with serine protease NS3. May form homooligomers. In terms of assembly, forms a heterodimer with NS2B. Interacts with NS4B. Interacts with unphosphorylated RNA-directed RNA polymerase NS5; this interaction stimulates RNA-directed RNA polymerase NS5 guanylyltransferase activity. As to quaternary structure, interacts with serine protease NS3. Homodimer. Interacts with host STAT2; this interaction inhibits the phosphorylation of the latter, and, when all viral proteins are present (polyprotein), targets STAT2 for degradation. Interacts with serine protease NS3. Interacts with host SCRIB; this interaction targets NS5 to the cell membrane periphery and nucleus, thereby allowing efficient host nuclear STAT1 inhibition. In terms of processing, specific enzymatic cleavages in vivo yield mature proteins. Cleavages in the lumen of endoplasmic reticulum are performed by host signal peptidase, whereas cleavages in the cytoplasmic side are performed by serine protease NS3. Signal cleavage at the 2K-4B site requires a prior NS3 protease-mediated cleavage at the 4A-2K site. Cleaved in post-Golgi vesicles by a host furin, releasing the mature small envelope protein M, and peptide pr. This cleavage is incomplete as up to 30% of viral particles still carry uncleaved prM. Post-translationally, N-glycosylated. In terms of processing, N-glycosylated. The excreted form is glycosylated and this is required for efficient secretion of the protein from infected cells. Acetylated by host KAT5. Acetylation modulates NS3 RNA-binding and unwinding activities and plays an important positive role for viral replication. Post-translationally, phosphorylated on serines residues. This phosphorylation may trigger NS5 nuclear localization.

It localises to the virion. It is found in the host nucleus. The protein resides in the host cytoplasm. The protein localises to the host perinuclear region. Its subcellular location is the secreted. It localises to the virion membrane. It is found in the host endoplasmic reticulum membrane. It catalyses the reaction Selective hydrolysis of -Xaa-Xaa-|-Yaa- bonds in which each of the Xaa can be either Arg or Lys and Yaa can be either Ser or Ala.. The catalysed reaction is RNA(n) + a ribonucleoside 5'-triphosphate = RNA(n+1) + diphosphate. It carries out the reaction a ribonucleoside 5'-triphosphate + H2O = a ribonucleoside 5'-diphosphate + phosphate + H(+). The enzyme catalyses ATP + H2O = ADP + phosphate + H(+). It catalyses the reaction a 5'-end (5'-triphosphoguanosine)-ribonucleoside in mRNA + S-adenosyl-L-methionine = a 5'-end (N(7)-methyl 5'-triphosphoguanosine)-ribonucleoside in mRNA + S-adenosyl-L-homocysteine. The catalysed reaction is a 5'-end (N(7)-methyl 5'-triphosphoguanosine)-ribonucleoside in mRNA + S-adenosyl-L-methionine = a 5'-end (N(7)-methyl 5'-triphosphoguanosine)-(2'-O-methyl-ribonucleoside) in mRNA + S-adenosyl-L-homocysteine + H(+). Plays a role in virus budding by binding to the cell membrane and gathering the viral RNA into a nucleocapsid that forms the core of a mature virus particle. During virus entry, may induce genome penetration into the host cytoplasm after hemifusion induced by the surface proteins. Can migrate to the cell nucleus where it modulates host functions. Functionally, inhibits RNA silencing by interfering with host Dicer. In terms of biological role, prevents premature fusion activity of envelope proteins in trans-Golgi by binding to envelope protein E at pH6.0. After virion release in extracellular space, gets dissociated from E dimers. Its function is as follows. Acts as a chaperone for envelope protein E during intracellular virion assembly by masking and inactivating envelope protein E fusion peptide. prM is the only viral peptide matured by host furin in the trans-Golgi network probably to avoid catastrophic activation of the viral fusion activity in acidic Golgi compartment prior to virion release. prM-E cleavage is inefficient, and many virions are only partially matured. These uncleaved prM would play a role in immune evasion. May play a role in virus budding. Exerts cytotoxic effects by activating a mitochondrial apoptotic pathway through M ectodomain. May display a viroporin activity. Functionally, binds to host cell surface receptor and mediates fusion between viral and cellular membranes. Envelope protein is synthesized in the endoplasmic reticulum in the form of heterodimer with protein prM. They play a role in virion budding in the ER, and the newly formed immature particle is covered with 60 spikes composed of heterodimer between precursor prM and envelope protein E. The virion is transported to the Golgi apparatus where the low pH causes dissociation of PrM-E heterodimers and formation of E homodimers. prM-E cleavage is inefficient, and many virions are only partially matured. These uncleaved prM would play a role in immune evasion. In terms of biological role, involved in immune evasion, pathogenesis and viral replication. Once cleaved off the polyprotein, is targeted to three destinations: the viral replication cycle, the plasma membrane and the extracellular compartment. Essential for viral replication. Required for formation of the replication complex and recruitment of other non-structural proteins to the ER-derived membrane structures. Excreted as a hexameric lipoparticle that plays a role against host immune response. Antagonizing the complement function. Binds to the host macrophages and dendritic cells. Inhibits signal transduction originating from Toll-like receptor 3 (TLR3). Its function is as follows. Component of the viral RNA replication complex that functions in virion assembly and antagonizes the host immune response. Required cofactor for the serine protease function of NS3. May have membrane-destabilizing activity and form viroporins. Functionally, displays three enzymatic activities: serine protease, NTPase and RNA helicase. NS3 serine protease, in association with NS2B, performs its autocleavage and cleaves the polyprotein at dibasic sites in the cytoplasm: C-prM, NS2A-NS2B, NS2B-NS3, NS3-NS4A, NS4A-2K and NS4B-NS5. NS3 RNA helicase binds RNA and unwinds dsRNA in the 3' to 5' direction. In terms of biological role, regulates the ATPase activity of the NS3 helicase activity. NS4A allows NS3 helicase to conserve energy during unwinding. Its function is as follows. Functions as a signal peptide for NS4B and is required for the interferon antagonism activity of the latter. Induces the formation of ER-derived membrane vesicles where the viral replication takes place. Inhibits interferon (IFN)-induced host STAT1 phosphorylation and nuclear translocation, thereby preventing the establishment of cellular antiviral state by blocking the IFN-alpha/beta pathway. Inhibits STAT2 translocation in the nucleus after IFN-alpha treatment. Functionally, replicates the viral (+) and (-) genome, and performs the capping of genomes in the cytoplasm. NS5 methylates viral RNA cap at guanine N-7 and ribose 2'-O positions. Besides its role in genome replication, also prevents the establishment of cellular antiviral state by blocking the interferon-alpha/beta (IFN-alpha/beta) signaling pathway. Inhibits host TYK2 and STAT2 phosphorylation, thereby preventing activation of JAK-STAT signaling pathway. The polypeptide is Genome polyprotein (Tick-borne encephalitis virus (strain Hypr) (TBEV)).